An 84-amino-acid polypeptide reads, in one-letter code: U-actitoxin-Avd8e (84 aa).

Residues 1-22 form the signal peptide; it reads MASARTLVLLLIGAVLMCQVSA. Positions 23–41 are excised as a propeptide; the sequence is DSELLNEILAAHMEEDMPE. Positions 44 to 84 constitute a ShKT domain; that stretch reads CIDRYRSNICGSVIRPLDCTRRKSRMGRFARTNCKKLCGFC. Disulfide bonds link C44-C84, C53-C77, and C62-C81.

The protein belongs to the sea anemone 8 toxin family.

It localises to the secreted. It is found in the nematocyst. This chain is U-actitoxin-Avd8e, found in Anemonia viridis (Snakelocks anemone).